We begin with the raw amino-acid sequence, 43 residues long: MIIKNNNNNNNNNNNNNNNNNNNNNNNNNNNNNNNNNIEIIIK.

Low complexity predominate over residues 1-37 (MIIKNNNNNNNNNNNNNNNNNNNNNNNNNNNNNNNNN). The disordered stretch occupies residues 1-43 (MIIKNNNNNNNNNNNNNNNNNNNNNNNNNNNNNNNNNIEIIIK).

This is an uncharacterized protein from Dictyostelium discoideum (Social amoeba).